We begin with the raw amino-acid sequence, 187 residues long: Calcium and integrin-binding family member 2 (187 aa).

EF-hand domains lie at 66-101, 103-138, and 144-179; these read RENP…LCES, PREL…LTKS, and EVVL…APDF. Ca(2+) contacts are provided by Asp-116, Asn-118, Asp-120, Asp-127, Asp-157, Asp-159, Asp-161, Lys-163, and Asp-168.

In terms of assembly, monomer. Homodimer. Interacts with WHRN and MYO7A. Interacts with ITGA2B (via C-terminus cytoplasmic tail region); the interactions are stabilized/increased in a calcium and magnesium-dependent manner. Interacts with ITGA7 (via C-terminus cytoplasmic tail region); the interactions are stabilized/increased in a calcium and magnesium-dependent manner. Interacts with TMC1. Interacts with TMC2. In terms of tissue distribution, widely expressed.

The protein localises to the cytoplasm. It localises to the cell projection. Its subcellular location is the stereocilium. The protein resides in the photoreceptor inner segment. It is found in the cilium. The protein localises to the photoreceptor outer segment. It localises to the cell membrane. Its subcellular location is the sarcolemma. Its function is as follows. Calcium- and integrin-binding protein that plays a role in intracellular calcium homeostasis. Acts as an auxiliary subunit of the sensory mechanoelectrical transduction (MET) channel in hair cells. Essential for mechanoelectrical transduction (MET) currents in auditory hair cells and thereby required for hearing. Regulates the function of hair cell mechanotransduction by controlling the distribution of transmembrane channel-like proteins TMC1 and TMC2, and by regulating the function of the MET channels in hair cells. Required for the maintenance of auditory hair cell stereocilia bundle morphology and function and for hair-cell survival in the cochlea. Critical for proper photoreceptor cell maintenance and function. Plays a role in intracellular calcium homeostasis by decreasing ATP-induced calcium release. The sequence is that of Calcium and integrin-binding family member 2 (CIB2) from Homo sapiens (Human).